The following is a 146-amino-acid chain: P antigen family member 1 (146 aa).

Residues 16-146 (YVESSEESSD…PEEDEGQSQP (131 aa)) form a disordered region. Residues 19–32 (SSEESSDEQPDEVE) show a composition bias toward acidic residues. Phosphoserine is present on Ser-63. Residues 79–92 (PDTKRVCLRNEEQM) are compositionally biased toward basic and acidic residues. Ser-105 bears the Phosphoserine mark. The span at 107–120 (EQVHPKTGCERGDG) shows a compositional bias: basic and acidic residues. Ser-144 carries the phosphoserine modification.

Belongs to the GAGE family. As to expression, isolated from prostate cancer cell lines; expression associated with progression to androgen insensitive phenotype. Expressed in normal testis and at lower level in normal placenta.

In Homo sapiens (Human), this protein is P antigen family member 1 (PAGE1).